Here is a 344-residue protein sequence, read N- to C-terminus: Phenylalanine--tRNA ligase alpha subunit (344 aa).

Glu259 provides a ligand contact to Mg(2+).

It belongs to the class-II aminoacyl-tRNA synthetase family. Phe-tRNA synthetase alpha subunit type 1 subfamily. As to quaternary structure, tetramer of two alpha and two beta subunits. Mg(2+) serves as cofactor.

The protein localises to the cytoplasm. The catalysed reaction is tRNA(Phe) + L-phenylalanine + ATP = L-phenylalanyl-tRNA(Phe) + AMP + diphosphate + H(+). In Petrotoga mobilis (strain DSM 10674 / SJ95), this protein is Phenylalanine--tRNA ligase alpha subunit.